The sequence spans 143 residues: Small ribosomal subunit protein uS12 (143 aa).

At P62 the chain carries Hydroxyproline.

This sequence belongs to the universal ribosomal protein uS12 family. In terms of assembly, component of the 40S small ribosomal subunit.

The protein localises to the cytoplasm. Its subcellular location is the cytosol. It is found in the rough endoplasmic reticulum. This is Small ribosomal subunit protein uS12 (RPS23) from Ciona intestinalis (Transparent sea squirt).